Here is a 205-residue protein sequence, read N- to C-terminus: Large ribosomal subunit protein uL4 (205 aa).

Positions 43-77 (RRRSGTASTKGRSDVAGSRAKLFRQKGTGRARRGD) are disordered. Over residues 63–73 (KLFRQKGTGRA) the composition is skewed to basic residues.

The protein belongs to the universal ribosomal protein uL4 family. As to quaternary structure, part of the 50S ribosomal subunit.

One of the primary rRNA binding proteins, this protein initially binds near the 5'-end of the 23S rRNA. It is important during the early stages of 50S assembly. It makes multiple contacts with different domains of the 23S rRNA in the assembled 50S subunit and ribosome. In terms of biological role, forms part of the polypeptide exit tunnel. This is Large ribosomal subunit protein uL4 from Desulfosudis oleivorans (strain DSM 6200 / JCM 39069 / Hxd3) (Desulfococcus oleovorans).